We begin with the raw amino-acid sequence, 188 residues long: Cell division protein ZapC (188 aa).

This sequence belongs to the ZapC family. In terms of assembly, interacts directly with FtsZ.

It is found in the cytoplasm. In terms of biological role, contributes to the efficiency of the cell division process by stabilizing the polymeric form of the cell division protein FtsZ. Acts by promoting interactions between FtsZ protofilaments and suppressing the GTPase activity of FtsZ. The chain is Cell division protein ZapC from Psychromonas ingrahamii (strain DSM 17664 / CCUG 51855 / 37).